Consider the following 159-residue polypeptide: RNA pyrophosphohydrolase (159 aa).

Residues 6-149 (GFRPNVGIIL…KREVYRRALK (144 aa)) form the Nudix hydrolase domain. The Nudix box motif lies at 38–59 (GGINPDETPEDALYRELNEEVG).

Belongs to the Nudix hydrolase family. RppH subfamily. It depends on a divalent metal cation as a cofactor.

In terms of biological role, accelerates the degradation of transcripts by removing pyrophosphate from the 5'-end of triphosphorylated RNA, leading to a more labile monophosphorylated state that can stimulate subsequent ribonuclease cleavage. The chain is RNA pyrophosphohydrolase from Pseudomonas fluorescens (strain SBW25).